The primary structure comprises 167 residues: uncharacterized protein (167 aa).

It to A.aeolicus aq_328.

This is an uncharacterized protein from Aquifex aeolicus (strain VF5).